Reading from the N-terminus, the 312-residue chain is Aspartate carbamoyltransferase catalytic subunit (312 aa).

Positions 58 and 59 each coordinate carbamoyl phosphate. K86 lines the L-aspartate pocket. Carbamoyl phosphate-binding residues include R108, H136, and Q139. 2 residues coordinate L-aspartate: R169 and R223. G264 and P265 together coordinate carbamoyl phosphate.

The protein belongs to the aspartate/ornithine carbamoyltransferase superfamily. ATCase family. In terms of assembly, heterododecamer (2C3:3R2) of six catalytic PyrB chains organized as two trimers (C3), and six regulatory PyrI chains organized as three dimers (R2).

The enzyme catalyses carbamoyl phosphate + L-aspartate = N-carbamoyl-L-aspartate + phosphate + H(+). Its pathway is pyrimidine metabolism; UMP biosynthesis via de novo pathway; (S)-dihydroorotate from bicarbonate: step 2/3. Its function is as follows. Catalyzes the condensation of carbamoyl phosphate and aspartate to form carbamoyl aspartate and inorganic phosphate, the committed step in the de novo pyrimidine nucleotide biosynthesis pathway. The protein is Aspartate carbamoyltransferase catalytic subunit of Syntrophomonas wolfei subsp. wolfei (strain DSM 2245B / Goettingen).